Here is a 399-residue protein sequence, read N- to C-terminus: uncharacterized protein (399 aa).

11 helical membrane-spanning segments follow: residues 19-39, 46-66, 91-111, 123-143, 146-166, 183-203, 225-247, 283-303, 307-327, 335-355, and 369-389; these read IFSI…PLFV, VNLL…LLMY, FYTI…PILG, QFEQ…IIAS, IYAK…IFIA, LLSA…ISYI, VAIL…MPIW, VLLL…LLGF, FGLD…FAYL, LFSI…YLGY, and IEYT…VYLL.

It localises to the host membrane. Its function is as follows. Putative amino acid transporter. This is an uncharacterized protein from Saccharolobus islandicus (Sulfolobus islandicus).